Consider the following 143-residue polypeptide: Flagellar assembly factor FliW (143 aa).

Belongs to the FliW family. Interacts with translational regulator CsrA and flagellin(s).

Its subcellular location is the cytoplasm. Acts as an anti-CsrA protein, binds CsrA and prevents it from repressing translation of its target genes, one of which is flagellin. Binds to flagellin and participates in the assembly of the flagellum. In Clostridium botulinum (strain Okra / Type B1), this protein is Flagellar assembly factor FliW.